The primary structure comprises 497 residues: MDQHDDFDSVSWRQDPESDISRPTTSGTDADESLEYNRDTNGKRRMSSVHEDPPQAGPLADAVDLAGIGDGVLECRVDSPLKENDGTKDAYISYLVTTHTDFKSFQKPDFAVRRRFTDFYFLYKTLYREYPACAVPPLPEKHKMEYVTGDRFGPEFTSRRAWSLHRFLKRLTLHPVLRRAPLLAIFLESPDWNAHMRLHSTRTSTGNSDGSGTGIFDNFTDTFVNAFTKVHKPDRRFIEVKEKADKLDEDLNHVEKIVARVARRESDLEADYNDLATQFRKLVPLEPDVEVPLQIFAASVEETARGFKMLKDHTDQNYLGSLRDMEAYIVSVKALLKTREQKQLDFEALVDYRNKAVAERDSLAANPSSYYASNPLTSSPASFIRSKMEDMRGVDHEQSRRERVRKLELRIDELTREVESAKTTSEMFDEEVVREVADFERIKAVEFRDTLGALAEKHIDFFQGAINTWERFVAEMEGDLDNDPEMSEHGRGGGVAA.

The tract at residues 1–59 (MDQHDDFDSVSWRQDPESDISRPTTSGTDADESLEYNRDTNGKRRMSSVHEDPPQAGPL) is disordered. The span at 35 to 53 (EYNRDTNGKRRMSSVHEDP) shows a compositional bias: basic and acidic residues. The PX domain occupies 72-194 (VLECRVDSPL…IFLESPDWNA (123 aa)). Residues arginine 115, threonine 117, lysine 141, and arginine 160 each coordinate a 1,2-diacyl-sn-glycero-3-phospho-(1D-myo-inositol-3-phosphate). 2 coiled-coil regions span residues 235–261 (RRFIEVKEKADKLDEDLNHVEKIVARV) and 397–432 (EQSRRERVRKLELRIDELTREVESAKTTSEMFDEEV).

This sequence belongs to the sorting nexin family.

It is found in the cytoplasm. The protein resides in the cytosol. The protein localises to the preautophagosomal structure membrane. Its subcellular location is the endosome membrane. In terms of biological role, sorting nexin, involved in the separation or division of vacuoles throughout the entire life cycle of the cells. Involved in retrieval of late-Golgi SNAREs from post-Golgi endosomes to the trans-Golgi network, for cytoplasm to vacuole transport (Cvt), and autophagy of large cargos including mitophagy, pexophagy and glycophagy. This Aspergillus fumigatus (strain ATCC MYA-4609 / CBS 101355 / FGSC A1100 / Af293) (Neosartorya fumigata) protein is Sorting nexin-4 (snx4).